Here is a 169-residue protein sequence, read N- to C-terminus: Cell division protein B3 (169 aa).

Its function is as follows. Part of a cell division machinery. May fulfill a coordination function between the Cdv proteins during cell division. The polypeptide is Cell division protein B3 (Sulfolobus acidocaldarius (strain ATCC 33909 / DSM 639 / JCM 8929 / NBRC 15157 / NCIMB 11770)).